The chain runs to 370 residues: Biotin synthase (370 aa).

The 236-residue stretch at 79–314 (CCGNVVDLCS…KQIIRYAGGR (236 aa)) folds into the Radical SAM core domain. Residues C97, C101, and C104 each contribute to the [4Fe-4S] cluster site. The [2Fe-2S] cluster site is built by C142, C179, C239, and R309.

It belongs to the radical SAM superfamily. Biotin synthase family. As to quaternary structure, homodimer. [4Fe-4S] cluster is required as a cofactor. [2Fe-2S] cluster serves as cofactor.

The catalysed reaction is (4R,5S)-dethiobiotin + (sulfur carrier)-SH + 2 reduced [2Fe-2S]-[ferredoxin] + 2 S-adenosyl-L-methionine = (sulfur carrier)-H + biotin + 2 5'-deoxyadenosine + 2 L-methionine + 2 oxidized [2Fe-2S]-[ferredoxin]. Its pathway is cofactor biosynthesis; biotin biosynthesis; biotin from 7,8-diaminononanoate: step 2/2. Its function is as follows. Catalyzes the conversion of dethiobiotin (DTB) to biotin by the insertion of a sulfur atom into dethiobiotin via a radical-based mechanism. This Trichodesmium erythraeum (strain IMS101) protein is Biotin synthase.